A 227-amino-acid chain; its full sequence is Cytidylate kinase (227 aa).

Gly12–Thr20 is a binding site for ATP.

The protein belongs to the cytidylate kinase family. Type 1 subfamily.

The protein localises to the cytoplasm. It catalyses the reaction CMP + ATP = CDP + ADP. The catalysed reaction is dCMP + ATP = dCDP + ADP. This is Cytidylate kinase from Escherichia fergusonii (strain ATCC 35469 / DSM 13698 / CCUG 18766 / IAM 14443 / JCM 21226 / LMG 7866 / NBRC 102419 / NCTC 12128 / CDC 0568-73).